A 216-amino-acid chain; its full sequence is uncharacterized protein (216 aa).

2 4Fe-4S ferredoxin-type domains span residues 160-189 (DDKP…IDEK) and 188-216 (EKPK…ALLP). 8 residues coordinate [4Fe-4S] cluster: Cys-169, Cys-172, Cys-175, Cys-179, Cys-197, Cys-200, Cys-203, and Cys-207.

It belongs to the FrhG family.

This is an uncharacterized protein from Methanocaldococcus jannaschii (strain ATCC 43067 / DSM 2661 / JAL-1 / JCM 10045 / NBRC 100440) (Methanococcus jannaschii).